A 120-amino-acid chain; its full sequence is Large ribosomal subunit protein bL19 (120 aa).

The protein belongs to the bacterial ribosomal protein bL19 family.

Functionally, this protein is located at the 30S-50S ribosomal subunit interface and may play a role in the structure and function of the aminoacyl-tRNA binding site. This Picosynechococcus sp. (strain ATCC 27264 / PCC 7002 / PR-6) (Agmenellum quadruplicatum) protein is Large ribosomal subunit protein bL19.